The primary structure comprises 262 residues: Nodulation protein J (262 aa).

One can recognise an ABC transmembrane type-2 domain in the interval 33–259 (ASILGNLAEP…FLSVGLLQRR (227 aa)). The next 6 membrane-spanning stretches (helical) occupy residues 35–55 (ILGN…GLGA), 62–82 (GIPY…MISA), 125–145 (ALLA…ASWP), 147–167 (VLFA…LAMI), 177–197 (YFIF…GAVF), and 236–256 (LHIS…VGLL).

Belongs to the ABC-2 integral membrane protein family. Lipooligosaccharide exporter (TC 3.A.1.102) subfamily. The complex is composed of two ATP-binding proteins (NodI) and two transmembrane proteins (NodJ).

The protein localises to the cell inner membrane. Functionally, part of the ABC transporter complex NodIJ involved in the export of the nodulation factors (Nod factors), the bacterial signal molecules that induce symbiosis and subsequent nodulation induction. Nod factors are LCO (lipo-chitin oligosaccharide), a modified beta-1,4-linked N-acetylglucosamine oligosaccharide. This subunit encodes the transporter. The protein is Nodulation protein J (nodJ) of Sinorhizobium fredii (strain NBRC 101917 / NGR234).